The primary structure comprises 119 residues: Large ribosomal subunit protein uL22 (119 aa).

The protein belongs to the universal ribosomal protein uL22 family. Part of the 50S ribosomal subunit.

This protein binds specifically to 23S rRNA; its binding is stimulated by other ribosomal proteins, e.g. L4, L17, and L20. It is important during the early stages of 50S assembly. It makes multiple contacts with different domains of the 23S rRNA in the assembled 50S subunit and ribosome. Its function is as follows. The globular domain of the protein is located near the polypeptide exit tunnel on the outside of the subunit, while an extended beta-hairpin is found that lines the wall of the exit tunnel in the center of the 70S ribosome. The chain is Large ribosomal subunit protein uL22 from Rickettsia bellii (strain OSU 85-389).